The chain runs to 121 residues: Large ribosomal subunit protein uL18 (121 aa).

This sequence belongs to the universal ribosomal protein uL18 family. Part of the 50S ribosomal subunit; part of the 5S rRNA/L5/L18/L25 subcomplex. Contacts the 5S and 23S rRNAs.

Functionally, this is one of the proteins that bind and probably mediate the attachment of the 5S RNA into the large ribosomal subunit, where it forms part of the central protuberance. This chain is Large ribosomal subunit protein uL18, found in Paracidovorax citrulli (strain AAC00-1) (Acidovorax citrulli).